Here is a 461-residue protein sequence, read N- to C-terminus: GTPase Der (461 aa).

EngA-type G domains lie at 25 to 188 (PVVA…PNVA) and 198 to 371 (RRVA…ASWD). GTP is bound by residues 31 to 38 (GRPNVGKS), 78 to 82 (DTGGW), 140 to 143 (NKVD), 204 to 211 (GKPNVGKS), 251 to 255 (DTAGL), and 316 to 319 (NKWD). The KH-like domain maps to 372–454 (TRIATGPLNI…PIRINVRVRE (83 aa)).

Belongs to the TRAFAC class TrmE-Era-EngA-EngB-Septin-like GTPase superfamily. EngA (Der) GTPase family. As to quaternary structure, associates with the 50S ribosomal subunit.

GTPase that plays an essential role in the late steps of ribosome biogenesis. The polypeptide is GTPase Der (Mycobacterium leprae (strain TN)).